The sequence spans 210 residues: Putative transmembrane protein DDB_G0267530 (210 aa).

The interval 1–40 is disordered; that stretch reads MGVEDQPQTQPQTQPQQQPQMGYQPQMGYQPQAQMGYQPQ. 2 helical membrane-spanning segments follow: residues 119-139 and 148-168; these read VIVFIIGFFFSIVWLGGFFFI and TFGILSVVFFFLVLVIVVIVV.

It localises to the membrane. This Dictyostelium discoideum (Social amoeba) protein is Putative transmembrane protein DDB_G0267530.